We begin with the raw amino-acid sequence, 89 residues long: Small ribosomal subunit protein uS14 (89 aa).

This sequence belongs to the universal ribosomal protein uS14 family. In terms of assembly, part of the 30S ribosomal subunit. Contacts proteins S3 and S10.

In terms of biological role, binds 16S rRNA, required for the assembly of 30S particles and may also be responsible for determining the conformation of the 16S rRNA at the A site. The polypeptide is Small ribosomal subunit protein uS14 (Pelodictyon phaeoclathratiforme (strain DSM 5477 / BU-1)).